The following is a 423-amino-acid chain: Gamma-glutamyl phosphate reductase (423 aa).

It belongs to the gamma-glutamyl phosphate reductase family.

Its subcellular location is the cytoplasm. It catalyses the reaction L-glutamate 5-semialdehyde + phosphate + NADP(+) = L-glutamyl 5-phosphate + NADPH + H(+). It participates in amino-acid biosynthesis; L-proline biosynthesis; L-glutamate 5-semialdehyde from L-glutamate: step 2/2. Catalyzes the NADPH-dependent reduction of L-glutamate 5-phosphate into L-glutamate 5-semialdehyde and phosphate. The product spontaneously undergoes cyclization to form 1-pyrroline-5-carboxylate. This chain is Gamma-glutamyl phosphate reductase, found in Burkholderia lata (strain ATCC 17760 / DSM 23089 / LMG 22485 / NCIMB 9086 / R18194 / 383).